The sequence spans 648 residues: Proton myo-inositol cotransporter (648 aa).

The Cytoplasmic segment spans residues 1–76 (MSRKASENVE…AARRQFQQDE (76 aa)). 3 positions are modified to phosphoserine: serine 6, serine 47, and serine 50. Residues 77–97 (TPAFVYVVAVFSALGGFLFGY) form a helical membrane-spanning segment. The Extracellular portion of the chain corresponds to 98–125 (DTGVVSGAMLLLKRQLSLDALWQELLVS). A helical membrane pass occupies residues 126-146 (STVGAAAVSALAGGALNGVFG). Residues 147-148 (RR) are Cytoplasmic-facing. The chain crosses the membrane as a helical span at residues 149–169 (AAILLASALFTAGSAVLAAAN). The Extracellular segment spans residues 170-178 (NKETLLAGR). Residues 179–199 (LVVGLGIGIASMTVPVYIAEV) form a helical membrane-spanning segment. Topologically, residues 200-212 (SPPNLRGRLVTIN) are cytoplasmic. Residues 213–233 (TLFITGGQFFASVVDGAFSYL) form a helical membrane-spanning segment. Over 234–239 (QKDGWR) the chain is Extracellular. Residues 240-260 (YMLGLAAVPAVIQFFGFLFLP) form a helical membrane-spanning segment. Residues 261–324 (ESPRWLIQKG…RMLSYPPTRR (64 aa)) lie on the Cytoplasmic side of the membrane. A helical transmembrane segment spans residues 325-345 (ALIVGCGLQMFQQLSGINTIM). Topologically, residues 346–363 (YYSATILQMSGVEDDRLA) are extracellular. The helical transmembrane segment at 364–384 (IWLASVTAFTNFIFTLVGVWL) threads the bilayer. The Cytoplasmic segment spans residues 385–393 (VEKVGRRKL). The helical transmembrane segment at 394–414 (TFGSLAGTTVALIILALGFVL) threads the bilayer. The Extracellular portion of the chain corresponds to 415-508 (SAQVSPRITF…NFCPTPYSWT (94 aa)). N-linked (GlcNAc...) asparagine glycans are attached at residues asparagine 433, asparagine 458, and asparagine 485. A helical membrane pass occupies residues 509–529 (ALLGLILYLVFFAPGMGPMPW). Residues 530–549 (TVNSEIYPLWARSTGNACSS) lie on the Cytoplasmic side of the membrane. A helical membrane pass occupies residues 550-570 (GINWIFNVLVSLTFLHTAEYL). At 571-573 (TYY) the chain is on the extracellular side. A helical membrane pass occupies residues 574 to 594 (GAFFLYAGFAAVGLLFIYGCL). Residues 595-648 (PETKGKKLEEIESLFDNRLCTCGTSDSDEGRYIEYIRVKGSNYHLSDNDASDVE) are Cytoplasmic-facing. Phosphoserine is present on residues serine 640 and serine 645.

This sequence belongs to the major facilitator superfamily. Sugar transporter (TC 2.A.1.1) family. In terms of processing, glycosylated. As to expression, predominantly expressed in the brain.

It is found in the cell membrane. It carries out the reaction myo-inositol(out) + H(+)(out) = myo-inositol(in) + H(+)(in). Its function is as follows. H(+)-myo-inositol cotransporter. Can also transport related stereoisomers. In Homo sapiens (Human), this protein is Proton myo-inositol cotransporter.